The sequence spans 302 residues: Sulfate adenylyltransferase subunit 2 (302 aa).

It belongs to the PAPS reductase family. CysD subfamily. In terms of assembly, heterodimer composed of CysD, the smaller subunit, and CysN.

It carries out the reaction sulfate + ATP + H(+) = adenosine 5'-phosphosulfate + diphosphate. The protein operates within sulfur metabolism; hydrogen sulfide biosynthesis; sulfite from sulfate: step 1/3. With CysN forms the ATP sulfurylase (ATPS) that catalyzes the adenylation of sulfate producing adenosine 5'-phosphosulfate (APS) and diphosphate, the first enzymatic step in sulfur assimilation pathway. APS synthesis involves the formation of a high-energy phosphoric-sulfuric acid anhydride bond driven by GTP hydrolysis by CysN coupled to ATP hydrolysis by CysD. This is Sulfate adenylyltransferase subunit 2 from Sodalis glossinidius (strain morsitans).